Here is a 207-residue protein sequence, read N- to C-terminus: MPKVAVYNVSGQKVSEMELSENIFGVEVNEHVLYEAVKNQLANKRQGTQSAKTRAEVRGGGRKPWKQKGTGRARAGTIRSPLWIGGGTVFAPKPRDHSYTLPRKVKRLALKSALTSKVNNEELLVLDELSLDTPKTKDMVNILKNLNADKKVLLVVGEKNEAIIKSASNIPGVTTALVNTINVYDILNHDKFIITKDAVEKVEEVYA.

Polar residues predominate over residues 43–52 (NKRQGTQSAK). Residues 43–72 (NKRQGTQSAKTRAEVRGGGRKPWKQKGTGR) form a disordered region. Basic residues predominate over residues 60-71 (GGRKPWKQKGTG).

It belongs to the universal ribosomal protein uL4 family. Part of the 50S ribosomal subunit.

Functionally, one of the primary rRNA binding proteins, this protein initially binds near the 5'-end of the 23S rRNA. It is important during the early stages of 50S assembly. It makes multiple contacts with different domains of the 23S rRNA in the assembled 50S subunit and ribosome. Forms part of the polypeptide exit tunnel. In Alkaliphilus metalliredigens (strain QYMF), this protein is Large ribosomal subunit protein uL4.